Reading from the N-terminus, the 873-residue chain is Cilia- and flagella-associated protein 58 (873 aa).

Coiled coils occupy residues 106 to 609 (VDSA…VISE) and 642 to 832 (ETQY…QKRK). The segment at 202 to 221 (QEIQHRQNEASRESRKKEKL) is disordered. Residues 204 to 221 (IQHRQNEASRESRKKEKL) show a composition bias toward basic and acidic residues.

Belongs to the CFAP58 family. In terms of assembly, interacts with ODFP2. As to expression, predominantly expressed in the testis. Also found at lower levels in ciliated cells and tissues such as neural progenitor cells and oviducts.

It is found in the cell projection. The protein localises to the cilium. It localises to the flagellum. The protein resides in the cytoplasm. Its subcellular location is the cytoskeleton. It is found in the microtubule organizing center. The protein localises to the centrosome. Functionally, has an essential role in the assembly and organization of the sperm flagellar axoneme. Required for the elongation of the primary cilium and sperm flagellar midpiece via modulation of the Notch signaling pathway. This chain is Cilia- and flagella-associated protein 58, found in Mus musculus (Mouse).